The chain runs to 54 residues: Large ribosomal subunit protein bL32c (54 aa).

Residues 1 to 25 show a composition bias toward basic residues; sequence MAVPKKRTSKAKKNSRKANWKRKAA. Positions 1-26 are disordered; sequence MAVPKKRTSKAKKNSRKANWKRKAAK.

Belongs to the bacterial ribosomal protein bL32 family.

Its subcellular location is the plastid. The protein resides in the chloroplast. The sequence is that of Large ribosomal subunit protein bL32c from Thalassiosira pseudonana (Marine diatom).